We begin with the raw amino-acid sequence, 221 residues long: Eukaryotic translation initiation factor 3 subunit K (221 aa).

The 170-residue stretch at 46 to 215 (YDLEANLACL…EKIEFDNLAP (170 aa)) folds into the PCI domain.

It belongs to the eIF-3 subunit K family. In terms of assembly, component of the eukaryotic translation initiation factor 3 (eIF-3) complex.

The protein localises to the cytoplasm. In terms of biological role, component of the eukaryotic translation initiation factor 3 (eIF-3) complex, which is involved in protein synthesis of a specialized repertoire of mRNAs and, together with other initiation factors, stimulates binding of mRNA and methionyl-tRNAi to the 40S ribosome. The eIF-3 complex specifically targets and initiates translation of a subset of mRNAs involved in cell proliferation. The sequence is that of Eukaryotic translation initiation factor 3 subunit K from Anopheles gambiae (African malaria mosquito).